Reading from the N-terminus, the 135-residue chain is Large ribosomal subunit protein mL41B (135 aa).

The N-terminal 13 residues, 1–13, are a transit peptide targeting the mitochondrion; the sequence is MGLITKIARGLVR.

This sequence belongs to the mitochondrion-specific ribosomal protein mL41 family. Component of the mitochondrial ribosome large subunit (39S) which comprises a 16S rRNA and about 50 distinct proteins.

It is found in the mitochondrion. Its function is as follows. Component of the mitochondrial ribosome large subunit. Also involved in apoptosis and cell cycle. This is Large ribosomal subunit protein mL41B (mrpl41-b) from Xenopus laevis (African clawed frog).